The following is a 185-amino-acid chain: Probable E3 ubiquitin-protein ligase ATL44 (185 aa).

A helical membrane pass occupies residues Val-29–Val-49. The RING-type; atypical zinc-finger motif lies at Cys-102–Arg-144. The interval Met-163–Pro-185 is disordered. Residues Ser-176–Pro-185 show a composition bias toward polar residues.

This sequence belongs to the RING-type zinc finger family. ATL subfamily. In terms of assembly, interacts with BIK1. Auto-monoubiquitination. In terms of tissue distribution, expressed in stems, flowers and green siliques.

It localises to the membrane. It catalyses the reaction S-ubiquitinyl-[E2 ubiquitin-conjugating enzyme]-L-cysteine + [acceptor protein]-L-lysine = [E2 ubiquitin-conjugating enzyme]-L-cysteine + N(6)-ubiquitinyl-[acceptor protein]-L-lysine.. The protein operates within protein modification; protein ubiquitination. Its function is as follows. E3 ubiquitin-protein ligase that possess E3 ubiquitin ligase activity in vitro and mediates protein monoubiquitination. Triggers the monoubiquitination of phosphorylated BIK1 in response to pathogen-associated molecular pattern (PAMP) detection. The chain is Probable E3 ubiquitin-protein ligase ATL44 from Arabidopsis thaliana (Mouse-ear cress).